The following is a 304-amino-acid chain: tRNA pseudouridine synthase B (304 aa).

D44 serves as the catalytic Nucleophile.

The protein belongs to the pseudouridine synthase TruB family. Type 1 subfamily.

The catalysed reaction is uridine(55) in tRNA = pseudouridine(55) in tRNA. Functionally, responsible for synthesis of pseudouridine from uracil-55 in the psi GC loop of transfer RNAs. In Novosphingobium aromaticivorans (strain ATCC 700278 / DSM 12444 / CCUG 56034 / CIP 105152 / NBRC 16084 / F199), this protein is tRNA pseudouridine synthase B.